A 309-amino-acid polypeptide reads, in one-letter code: Ribonuclease Z (309 aa).

Residues histidine 63, histidine 65, aspartate 67, histidine 68, histidine 141, aspartate 212, and histidine 270 each contribute to the Zn(2+) site. Aspartate 67 (proton acceptor) is an active-site residue.

This sequence belongs to the RNase Z family. In terms of assembly, homodimer. Requires Zn(2+) as cofactor.

The catalysed reaction is Endonucleolytic cleavage of RNA, removing extra 3' nucleotides from tRNA precursor, generating 3' termini of tRNAs. A 3'-hydroxy group is left at the tRNA terminus and a 5'-phosphoryl group is left at the trailer molecule.. Functionally, zinc phosphodiesterase, which displays some tRNA 3'-processing endonuclease activity. Probably involved in tRNA maturation, by removing a 3'-trailer from precursor tRNA. This is Ribonuclease Z from Limosilactobacillus reuteri (strain DSM 20016) (Lactobacillus reuteri).